We begin with the raw amino-acid sequence, 1807 residues long: Integrin beta-4 (1807 aa).

The first 27 residues, Met1 to Ala27, serve as a signal peptide directing secretion. At Asn28 to Ser713 the chain is on the extracellular side. Residues Arg29–Arg73 enclose the PSI domain. 8 cysteine pairs are disulfide-bonded: Cys30–Cys48, Cys38–Cys456, Cys41–Cys61, Cys51–Cys72, Cys245–Cys288, Cys458–Cys477, Cys469–Cys480, and Cys482–Cys491. A VWFA domain is found at Asp131–Phe340. Residues Ser139 and Ser141 each coordinate Mg(2+). Ca(2+) contacts are provided by Ser141, Asp144, Asp145, and Asp176. Positions Trp194–Pro199 are involved in NRG1- and IGF1-binding. Positions 228, 230, 232, and 233 each coordinate Ca(2+). Glu233 lines the Mg(2+) pocket. Residue Asn327 is glycosylated (N-linked (GlcNAc...) asparagine). Glu350 contributes to the Ca(2+) binding site. I-EGF domains are found at residues Cys458–Asn492, Cys493–Glu538, Tyr539–Asp575, and Cys576–Glu617. Asn492 carries N-linked (GlcNAc...) asparagine glycosylation. 11 disulfides stabilise this stretch: Cys493–Cys521, Cys504–Cys519, Cys513–Cys524, Cys526–Cys537, Cys544–Cys558, Cys552–Cys563, Cys565–Cys574, Cys576–Cys599, Cys583–Cys597, Cys591–Cys602, and Cys604–Cys616. Residue Asn580 is glycosylated (N-linked (GlcNAc...) asparagine). Asn619 carries N-linked (GlcNAc...) asparagine glycosylation. Intrachain disulfides connect Cys628-Cys673, Cys634-Cys653, Cys637-Cys650, and Cys682-Cys708. N-linked (GlcNAc...) asparagine glycosylation is present at Asn697. A helical membrane pass occupies residues Trp714 to Cys734. The segment at Cys734–Cys751 is palmitoylated on several cysteines. Topologically, residues Trp735 to Thr1807 are cytoplasmic. Residues Ser773, Ser1071, and Ser1121 each carry the phosphoserine modification. The region spanning Val981–Ser1086 is the Calx-beta domain. Residues Ser1119 to Gly1141 form a disordered region. Fibronectin type-III domains follow at residues Ala1131–Glu1220 and Glu1224–Lys1323. Phosphoserine is present on residues Ser1386, Ser1389, and Ser1405. Position 1418 is a phosphothreonine (Thr1418). The residue at position 1425 (Ser1425) is a Phosphoserine. Phosphothreonine is present on Thr1514. Fibronectin type-III domains lie at Thr1514–Gln1609 and Ala1627–Gly1723. Ser1776 bears the Phosphoserine mark.

Belongs to the integrin beta chain family. As to quaternary structure, heterodimer of an alpha and a beta subunit. Beta-4 associates with alpha-6. Interacts (via cytoplasmic region) with COL17A1 (via cytoplasmic region). Interacts (via cytoplasmic region) with DST isoform 3 (via N-terminus). Interacts (via cytoplasmic domain) with DST (via N-terminus). Interacts with RAC1. ITGA6:ITGB4 is found in a ternary complex with NRG1 and ERBB3. ITGA6:ITGB4 is found in a ternary complex with IGF1 and IGF1R. ITGA6:ITGB4 interacts with IGF2. Interacts with TMEM268; this interaction prevents ITGB4 degradation. Palmitoylated by DHHC3 at several cysteines of the membrane-proximal region, enhancing stability and cell surface expression. Palmitoylation also promotes secondary association with tertaspanins.

Its subcellular location is the cell membrane. It is found in the cell junction. The protein localises to the hemidesmosome. Its function is as follows. Integrin alpha-6/beta-4 is a receptor for laminin. It plays a critical structural role in the hemidesmosome of epithelial cells. Is required for the regulation of keratinocyte polarity and motility. ITGA6:ITGB4 binds to NRG1 (via EGF domain) and this binding is essential for NRG1-ERBB signaling. ITGA6:ITGB4 binds to IGF1 and this binding is essential for IGF1 signaling. ITGA6:ITGB4 binds to IGF2 and this binding is essential for IGF2 signaling. This Rattus norvegicus (Rat) protein is Integrin beta-4 (Itgb4).